Here is a 277-residue protein sequence, read N- to C-terminus: Shikimate dehydrogenase (NADP(+)) (277 aa).

Shikimate contacts are provided by residues 15 to 17 (SLS) and Thr-62. Catalysis depends on Lys-66, which acts as the Proton acceptor. Shikimate contacts are provided by Asn-87 and Asp-102. NADP(+) is bound by residues 127-131 (GAGGA), 151-156 (NRTVDK), and Ile-219. A shikimate-binding site is contributed by Tyr-221. Gly-242 provides a ligand contact to NADP(+).

Belongs to the shikimate dehydrogenase family. As to quaternary structure, homodimer.

It carries out the reaction shikimate + NADP(+) = 3-dehydroshikimate + NADPH + H(+). It functions in the pathway metabolic intermediate biosynthesis; chorismate biosynthesis; chorismate from D-erythrose 4-phosphate and phosphoenolpyruvate: step 4/7. Functionally, involved in the biosynthesis of the chorismate, which leads to the biosynthesis of aromatic amino acids. Catalyzes the reversible NADPH linked reduction of 3-dehydroshikimate (DHSA) to yield shikimate (SA). This chain is Shikimate dehydrogenase (NADP(+)), found in Bacillus cereus (strain AH820).